A 398-amino-acid chain; its full sequence is Calcium-binding and coiled-coil domain-containing protein 2 (398 aa).

The CLIR signature appears at 133 to 136 (ILVV). A coiled-coil region spans residues 137-301 (TTQGEVEEIE…RENSRLLSYM (165 aa)). An LIR-like motif is present at residues 203-206 (DYWE). A disordered region spans residues 314-341 (TSDEGGAGQNPGLVYGNPYSGIQESSSP). Residues 323–333 (NPGLVYGNPYS) form an interaction with LGALS8 region. The interval 347–398 (KKCPICKADDICDHTLEQQQMQALCLNCPICDKIFPATEKQIFEDHVFCHSL) is interaction with MYO6. Residues 371–396 (CLNCPICDKIFPATEKQIFEDHVFCH) form a UBZ1-type zinc finger. Positions 374, 377, 392, and 396 each coordinate Zn(2+). Ser397 bears the Phosphoserine mark.

This sequence belongs to the CALCOCO family. In terms of assembly, dimer. Part of a complex consisting of CALCOCO2, TAX1BP1 and MYO6. Interacts with MYO6. Interacts with GEMIN4. Interacts with ATG8 family members MAP1LC3A, MAP1LC3B, GABARAP, GABARAPL1 and GABARAPL2. Interacts with ATG8 family member MAP1LC3C. Interacts with LGALS8. Interacts with TOM1; the interaction is indirect and is mediated by MYO6, which acts as a bridge between TOM1 and CALCOCO2. Interacts with AZI2.

It localises to the cytoplasm. Its subcellular location is the perinuclear region. The protein resides in the cytoskeleton. The protein localises to the cytoplasmic vesicle. It is found in the autophagosome membrane. In terms of biological role, xenophagy-specific receptor required for autophagy-mediated intracellular bacteria degradation. Acts as an effector protein of galectin-sensed membrane damage that restricts the proliferation of infecting pathogens upon entry into the cytosol by targeting LGALS8-associated bacteria for autophagy. Initially orchestrates bacteria targeting to autophagosomes and subsequently ensures pathogen degradation by regulating pathogen-containing autophagosome maturation. Bacteria targeting to autophagosomes relies on its interaction with MAP1LC3A, MAP1LC3B and/or GABARAPL2, whereas regulation of pathogen-containing autophagosome maturation requires the interaction with MAP3LC3C. May play a role in ruffle formation and actin cytoskeleton organization and seems to negatively regulate constitutive secretion. This Macaca fascicularis (Crab-eating macaque) protein is Calcium-binding and coiled-coil domain-containing protein 2.